The sequence spans 130 residues: Protein ApaG (130 aa).

In terms of domain architecture, ApaG spans 3-127; sequence SAMTRSINIL…FSLDSPHAKR (125 aa).

This chain is Protein ApaG, found in Parvibaculum lavamentivorans (strain DS-1 / DSM 13023 / NCIMB 13966).